A 523-amino-acid chain; its full sequence is Probable malate:quinone oxidoreductase (523 aa).

It belongs to the MQO family. FAD is required as a cofactor.

It carries out the reaction (S)-malate + a quinone = a quinol + oxaloacetate. It functions in the pathway carbohydrate metabolism; tricarboxylic acid cycle; oxaloacetate from (S)-malate (quinone route): step 1/1. This is Probable malate:quinone oxidoreductase from Agrobacterium fabrum (strain C58 / ATCC 33970) (Agrobacterium tumefaciens (strain C58)).